We begin with the raw amino-acid sequence, 739 residues long: Adenosylcobalamin-dependent ribonucleoside-triphosphate reductase (739 aa).

An intrachain disulfide couples cysteine 119 to cysteine 419. The effector region-1 stretch occupies residues 147–158; it reads SMPFSFLFDELM. The segment at 168–313 is effector region-2; it reads ARSNISQIPR…ICNLIGKAVV (146 aa). Active-site residues include cysteine 408 and glutamate 410. The interval 565-626 is adenosylcobalamin-binding-1; the sequence is FHYGAYLIQR…NPNFASAGTV (62 aa). The tract at residues 685–724 is adenosylcobalamin-binding-2; sequence LQQAPKEPIDKETYEKRSQEITGNVEEVFSQLNSDVKDLE.

This sequence belongs to the class II ribonucleoside-triphosphate reductase family. Monomer. Adenosylcob(III)alamin serves as cofactor.

It carries out the reaction a 2'-deoxyribonucleoside 5'-triphosphate + [thioredoxin]-disulfide + H2O = a ribonucleoside 5'-triphosphate + [thioredoxin]-dithiol. Its activity is regulated as follows. Allosterically regulated by ATP and dNTP. This chain is Adenosylcobalamin-dependent ribonucleoside-triphosphate reductase (rtpR), found in Lactobacillus delbrueckii subsp. bulgaricus (strain ATCC BAA-365 / Lb-18).